The primary structure comprises 200 residues: Peptidyl-tRNA hydrolase (200 aa).

TRNA is bound at residue Y15. H20 (proton acceptor) is an active-site residue. F66, N68, and N114 together coordinate tRNA.

This sequence belongs to the PTH family. In terms of assembly, monomer.

The protein localises to the cytoplasm. The catalysed reaction is an N-acyl-L-alpha-aminoacyl-tRNA + H2O = an N-acyl-L-amino acid + a tRNA + H(+). Hydrolyzes ribosome-free peptidyl-tRNAs (with 1 or more amino acids incorporated), which drop off the ribosome during protein synthesis, or as a result of ribosome stalling. Functionally, catalyzes the release of premature peptidyl moieties from peptidyl-tRNA molecules trapped in stalled 50S ribosomal subunits, and thus maintains levels of free tRNAs and 50S ribosomes. The polypeptide is Peptidyl-tRNA hydrolase (Ralstonia nicotianae (strain ATCC BAA-1114 / GMI1000) (Ralstonia solanacearum)).